The following is a 150-amino-acid chain: Transcriptional repressor NrdR (150 aa).

A zinc finger lies at 3–34 (CPFCHHPQSRVIDSRTVENGFVTRRRRQCTKC). In terms of domain architecture, ATP-cone spans 46–136 (LLVEKRNGVT…VYKSFSSMED (91 aa)).

This sequence belongs to the NrdR family. The cofactor is Zn(2+).

Its function is as follows. Negatively regulates transcription of bacterial ribonucleotide reductase nrd genes and operons by binding to NrdR-boxes. The protein is Transcriptional repressor NrdR of Corynebacterium kroppenstedtii (strain DSM 44385 / JCM 11950 / CIP 105744 / CCUG 35717).